Reading from the N-terminus, the 315-residue chain is Borealin (315 aa).

2 disordered regions span residues 103 to 126 and 138 to 226; these read IEGH…GASG and LRST…TPPM. At threonine 146 the chain carries Phosphothreonine. Serine 152 bears the Phosphoserine mark. Over residues 153–162 the composition is skewed to basic residues; that stretch reads ARARRARRSR. The residue at position 163 (serine 163) is a Phosphoserine. The segment covering 178–188 has biased composition (low complexity); it reads SISSSSSSSRN. Serine 205 is subject to Phosphoserine. Residue threonine 209 is modified to Phosphothreonine. A phosphoserine mark is found at serine 218, serine 220, and serine 244.

This sequence belongs to the borealin family. In terms of assembly, component of the CPC complex. Ubiquitously expressed in the early embryo. Expression is restricted to the ventral nerve cord and brain during later embryonic stages.

The protein localises to the nucleus. It is found in the chromosome. Its subcellular location is the centromere. It localises to the cytoplasm. The protein resides in the cytoskeleton. The protein localises to the spindle. In terms of biological role, component of the chromosomal passenger complex (CPC), a complex that acts as a key regulator of embryonic mitosis. The CPC complex has essential functions at the centromere for ensuring sister chromatid cohesion, recruitment of the CPC to kinetochores, and chromosome alignment and segregation. There is no function in meiotic histone phosphorylation or spindle formation. This chain is Borealin (borr), found in Drosophila melanogaster (Fruit fly).